The sequence spans 192 residues: Transmembrane protein 276 (192 aa).

Positions 1 to 32 (MVSKPRTEWSTVLSHLVLAGVSLHAAVSSVQS) are cleaved as a signal peptide. The next 4 helical transmembrane spans lie at 35 to 55 (GAAA…APGP), 63 to 83 (AGAW…FHWV), 92 to 112 (LLLG…PEGC), and 114 to 134 (VAGQ…AVFT).

The protein localises to the membrane. The polypeptide is Transmembrane protein 276 (Mus musculus (Mouse)).